A 293-amino-acid polypeptide reads, in one-letter code: Ankyrin repeat and SOCS box protein 11 (293 aa).

7 ANK repeats span residues 36 to 65 (DDRT…NVGM), 69 to 98 (DGIT…DANA), 102 to 131 (DGAT…AHHP), 134 to 163 (LLCS…NVDM), 167 to 196 (SVGT…DVQC), 199 to 228 (GLDT…DRTS), and 232 to 259 (EGKT…SLSQ). The SOCS box domain maps to 244–293 (SIKHLLQTAGTCSLSQLCRWCIRRSLGQKGLNKTKTLCLPHMLHNYLLYH).

It belongs to the ankyrin SOCS box (ASB) family. Substrate-recognition component of the ECS(ASB11) complex, composed of asb11, cul5, elob, eloc and rnf7/rbx2. Expressed in the developing nervous system: localizes to neural plate margins and is abutting the proneuronal zone.

It localises to the endoplasmic reticulum. It participates in protein modification; protein ubiquitination. Substrate-recognition component of a cullin-5-RING E3 ubiquitin-protein ligase complex (ECS complex, also named CRL5 complex), which mediates the ubiquitination and subsequent proteasomal degradation of target proteins. Acts as a regulator of the neuronal progenitor compartment size by maintaining the neural precursors in the proliferating undifferentiated state. The ECS(ASB11) complex acts as a positive regulator of Notch signaling pathway by mediating ubiquitination and degradation of DeltaA (dla). Also acts as a regulator of regenerative myogenesis. This chain is Ankyrin repeat and SOCS box protein 11, found in Danio rerio (Zebrafish).